The chain runs to 245 residues: MAATSPVSRIFASLQPANSSALHTGDLENRAGIVVGQHGGREVQVSGSAELSAAPDRAQVCIAVSSSKGTAAEAKSSVQRRLEYIAQSLRQGGVTEENITVSKEFQRLSNTYKMEAVVCVVFSDFDKLQSNCNLLVEKLDSSVNISPPHFYHTADCLEKLRREVCLGAVANARRKAQEVCRLVGHSLGKALIIREEELREWEDQAESSQAHQSIQSKIKTATIYAASKILATFEIKGKERHKKNR.

This sequence belongs to the IRAK1BP1 family.

It is found in the cytoplasm. Its subcellular location is the nucleus. Functionally, may be part of a signaling pathway that leads to NF-kappa-B activation. The sequence is that of Interleukin-1 receptor-associated kinase 1-binding protein 1 homolog (irak1bp1) from Xenopus laevis (African clawed frog).